A 310-amino-acid polypeptide reads, in one-letter code: uncharacterized protein (310 aa).

Helical transmembrane passes span Ala10 to Ile30, Thr44 to Ala64, Phe78 to Ala98, Leu113 to Trp133, and Val161 to Ala181. The segment covering Pro285 to Glu297 has biased composition (basic and acidic residues). A disordered region spans residues Pro285–Asn310.

The protein belongs to the cation diffusion facilitator (CDF) transporter (TC 2.A.4) family.

Its subcellular location is the cell membrane. This is an uncharacterized protein from Synechocystis sp. (strain ATCC 27184 / PCC 6803 / Kazusa).